Consider the following 459-residue polypeptide: Cyclin-dependent kinase F-4 (459 aa).

Residues Phe4–Phe283 enclose the Protein kinase domain. Residues Val10–Val18 and Lys33 contribute to the ATP site. Catalysis depends on Asp125, which acts as the Proton acceptor. At Ser151 the chain carries Phosphoserine. Thr156 carries the phosphothreonine modification. The segment at Lys310–Gly397 is disordered. Polar residues-rich tracts occupy residues Ser322 to Gly346 and Glu366 to Arg375.

It belongs to the protein kinase superfamily. CMGC Ser/Thr protein kinase family. CDC2/CDKX subfamily.

It carries out the reaction L-seryl-[protein] + ATP = O-phospho-L-seryl-[protein] + ADP + H(+). It catalyses the reaction L-threonyl-[protein] + ATP = O-phospho-L-threonyl-[protein] + ADP + H(+). The catalysed reaction is [DNA-directed RNA polymerase] + ATP = phospho-[DNA-directed RNA polymerase] + ADP + H(+). This is Cyclin-dependent kinase F-4 (CDKF-4) from Oryza sativa subsp. japonica (Rice).